The following is a 208-amino-acid chain: Small ribosomal subunit protein uS4B (208 aa).

The S4 RNA-binding domain maps to 95 to 160 (KRLDNVVFRL…NQVYMAAKQA (66 aa)).

The protein belongs to the universal ribosomal protein uS4 family. In terms of assembly, part of the 30S ribosomal subunit. Contacts protein S5. The interaction surface between S4 and S5 is involved in control of translational fidelity.

Functionally, one of the primary rRNA binding proteins, it binds directly to 16S rRNA where it nucleates assembly of the body of the 30S subunit. With S5 and S12 plays an important role in translational accuracy. The protein is Small ribosomal subunit protein uS4B of Bdellovibrio bacteriovorus (strain ATCC 15356 / DSM 50701 / NCIMB 9529 / HD100).